The chain runs to 590 residues: Arginine--tRNA ligase (590 aa).

Positions 130-140 match the 'HIGH' region motif; sequence PNIAKEMHVGH.

It belongs to the class-I aminoacyl-tRNA synthetase family. As to quaternary structure, monomer.

It localises to the cytoplasm. It carries out the reaction tRNA(Arg) + L-arginine + ATP = L-arginyl-tRNA(Arg) + AMP + diphosphate. The chain is Arginine--tRNA ligase from Synechococcus sp. (strain CC9605).